The sequence spans 110 residues: Small ubiquitin-related modifier 3 (110 aa).

Glycyl lysine isopeptide (Lys-Gly) (interchain with G-Cter in SUMO2) cross-links involve residues Lys5 and Lys7. Lys11 participates in a covalent cross-link: Glycyl lysine isopeptide (Lys-Gly) (interchain with G-Cter in SUMO); alternate. Lys11 participates in a covalent cross-link: Glycyl lysine isopeptide (Lys-Gly) (interchain with G-Cter in SUMO2); alternate. The region spanning 15-92 (DHINLKVAGQ…IDVFQQQTGG (78 aa)) is the Ubiquitin-like domain. The segment covering 88 to 101 (QQTGGSASRGSVPT) has biased composition (polar residues). Residues 88–110 (QQTGGSASRGSVPTPNRCPDLCY) form a disordered region. Gly92 is covalently cross-linked (Glycyl lysine isopeptide (Gly-Lys) (interchain with K-? in acceptor proteins)). Positions 93–110 (SASRGSVPTPNRCPDLCY) are excised as a propeptide.

It belongs to the ubiquitin family. SUMO subfamily. As to quaternary structure, interacts with SAE2 and UBE2I. Covalently attached to a number of proteins. Interacts with USP25 (via ts SIM domain); the interaction sumoylates USP25 and inhibits its ubiquitin hydrolyzing activity. Interacts with BMAL1. In terms of processing, polymeric chains can be formed through Lys-11 cross-linking. Post-translationally, cleavage of precursor form by SENP1, SENP2 or SENP5 is necessary for function.

It localises to the cytoplasm. It is found in the nucleus. Its subcellular location is the PML body. In terms of biological role, ubiquitin-like protein which can be covalently attached to target lysines either as a monomer or as a lysine-linked polymer. Does not seem to be involved in protein degradation and may function as an antagonist of ubiquitin in the degradation process. Plays a role in a number of cellular processes such as nuclear transport, DNA replication and repair, mitosis and signal transduction. Covalent attachment to its substrates requires prior activation by the E1 complex SAE1-SAE2 and linkage to the E2 enzyme UBE2I, and can be promoted by an E3 ligase such as PIAS1-4, RANBP2 or CBX4. Plays a role in the regulation of sumoylation status of SETX. The polypeptide is Small ubiquitin-related modifier 3 (Mus musculus (Mouse)).